We begin with the raw amino-acid sequence, 338 residues long: Tagatose 1,6-diphosphate aldolase (338 aa).

This sequence belongs to the aldolase LacD family.

The enzyme catalyses D-tagatofuranose 1,6-bisphosphate = D-glyceraldehyde 3-phosphate + dihydroxyacetone phosphate. The protein operates within carbohydrate metabolism; D-tagatose 6-phosphate degradation; D-glyceraldehyde 3-phosphate and glycerone phosphate from D-tagatose 6-phosphate: step 2/2. The sequence is that of Tagatose 1,6-diphosphate aldolase from Listeria monocytogenes serovar 1/2a (strain ATCC BAA-679 / EGD-e).